The chain runs to 219 residues: Ribose-5-phosphate isomerase A (219 aa).

Substrate is bound by residues 28–31 (TGST), 81–84 (DGAD), and 94–97 (KGGG). Glu103 (proton acceptor) is an active-site residue. Residue Lys121 participates in substrate binding.

It belongs to the ribose 5-phosphate isomerase family. In terms of assembly, homodimer.

The enzyme catalyses aldehydo-D-ribose 5-phosphate = D-ribulose 5-phosphate. It participates in carbohydrate degradation; pentose phosphate pathway; D-ribose 5-phosphate from D-ribulose 5-phosphate (non-oxidative stage): step 1/1. Functionally, catalyzes the reversible conversion of ribose-5-phosphate to ribulose 5-phosphate. The protein is Ribose-5-phosphate isomerase A of Methylibium petroleiphilum (strain ATCC BAA-1232 / LMG 22953 / PM1).